A 428-amino-acid polypeptide reads, in one-letter code: MAGRRDRIQQLRGSRIAIAIFVGILIGCVCSVLFPNGFFNSGSSLIANEERISKSTSTDGLASCESSERVKMLKSDFSIISVKNAELRKQVRELTEKVRLAEQETENARKQVLVLGSEIKAGPFGTVKSLRTNPTVVPDESVNPRLAKLLEKVAVNKEIIVVLANSNVKPMLELQIASVKRVGIQNYLIVALDDSMESFCESKEVVFYKRDPDKAVDMVGKSGGNHAVSGLKFRVLREFLQLGYSVLLSDVDIVFLQNPFSHLHRDSDVESMSDGHDNNTAYGFNDVFDEPSMGWARYAHTMRIWVFNSGFFYLRPTIPSIDLLDRVADTLSKSEAWDQAVFNEQLFYPSHPGYTGLHASKRVMDMYEFMNSKVLFKTVRKNQELKKLKPVIVHLNYHPDKLERMHAVVEFYVNGKQDALDSFPDGSD.

The Cytoplasmic portion of the chain corresponds to 1–15 (MAGRRDRIQQLRGSR). The helical; Signal-anchor for type II membrane protein transmembrane segment at 16 to 36 (IAIAIFVGILIGCVCSVLFPN) threads the bilayer. Over 37–428 (GFFNSGSSLI…ALDSFPDGSD (392 aa)) the chain is Lumenal. Positions 250–252 (DVD) match the DXD motif motif. Asparagine 278 is a glycosylation site (N-linked (GlcNAc...) asparagine).

It belongs to the glycosyltransferase 77 family. In terms of tissue distribution, expressed in roots, rosette and cauline leaves, stems, flowers and siliques.

Its subcellular location is the golgi apparatus membrane. In terms of biological role, plays a role in the arabinosylation of cell wall components. Involved in the arabinosylation of extensin proteins in root hair cells. Extensins are structural glycoproteins present in cell walls and its arabinosylation is important for root hair cell development. In Arabidopsis thaliana (Mouse-ear cress), this protein is Arabinosyltransferase RRA2.